The following is a 231-amino-acid chain: Somatolactin-2 (231 aa).

The signal sequence occupies residues 1–24 (MRMMRAIKQGQWAILLWPYLLTTS). Disulfide bonds link C29–C39, C89–C205, and C222–C230. N-linked (GlcNAc...) asparagine glycosylation occurs at N145.

Belongs to the somatotropin/prolactin family. As to expression, pituitary gland.

It localises to the secreted. The sequence is that of Somatolactin-2 from Sparus aurata (Gilthead sea bream).